We begin with the raw amino-acid sequence, 188 residues long: Adenine phosphoribosyltransferase (188 aa).

The protein belongs to the purine/pyrimidine phosphoribosyltransferase family. Homodimer.

The protein localises to the cytoplasm. It catalyses the reaction AMP + diphosphate = 5-phospho-alpha-D-ribose 1-diphosphate + adenine. Its pathway is purine metabolism; AMP biosynthesis via salvage pathway; AMP from adenine: step 1/1. Functionally, catalyzes a salvage reaction resulting in the formation of AMP, that is energically less costly than de novo synthesis. This is Adenine phosphoribosyltransferase from Salinispora arenicola (strain CNS-205).